A 395-amino-acid polypeptide reads, in one-letter code: Chalcone synthase 7 (395 aa).

The active site involves Cys-169.

This sequence belongs to the thiolase-like superfamily. Chalcone/stilbene synthases family.

The enzyme catalyses (E)-4-coumaroyl-CoA + 3 malonyl-CoA + 3 H(+) = 2',4,4',6'-tetrahydroxychalcone + 3 CO2 + 4 CoA. It participates in secondary metabolite biosynthesis; flavonoid biosynthesis. In terms of biological role, the primary product of this enzyme is 4,2',4',6'-tetrahydroxychalcone (also termed naringenin-chalcone or chalcone) which can under specific conditions spontaneously isomerize into naringenin. The protein is Chalcone synthase 7 (CSF7) of Picea mariana (Black spruce).